Here is a 422-residue protein sequence, read N- to C-terminus: m7GpppN-mRNA hydrolase (422 aa).

Positions 95–226 (MGVPTYGAII…KLGLAPNKFF (132 aa)) constitute a Nudix hydrolase domain. A Nudix box motif is present at residues 129–150 (GKVNKEEAPHDCAAREVFEETG). Mn(2+)-binding residues include E144 and E148. Residues S246, S247, S249, S276, and S284 each carry the phosphoserine modification. Residues 247-347 (SDSDNGFSSA…GVHGQPAKQQ (101 aa)) are disordered. The span at 249-258 (SDNGFSSAGS) shows a compositional bias: low complexity. Positions 303–312 (NHGEVSDLLK) are enriched in basic and acidic residues.

This sequence belongs to the Nudix hydrolase family. DCP2 subfamily. In terms of assembly, found in a mRNA decay complex with LSM1, LSM3, LSM4, EXOSC2, EXOSC4, EXOSC10, PARN, XRN1, CNOT6, UPF1, UPF2 and UPF3B. Forms a complex with DCP1A, EDC3, DDX6 and EDC4/HEDLS, within this complex directly interacts with EDC4/HEDLS. Interacts with DPC1B, UPF1, UPF2 and UPF3B. Associates with polysomes. Interacts (via N-terminus and C-terminus) with TRIM21 (via N-terminus and C-terminus). Interacts with LIMD1, WTIP and AJUBA. Interacts with DDX17 in an RNA-dependent manner. Interacts with ZC3HAV1. Interacts with APOBEC3G in an RNA-dependent manner. Interacts with ZFP36L1 (via N-terminus). Interacts with NBDY. Requires Mn(2+) as cofactor. Mg(2+) is required as a cofactor. As to expression, strongly expressed in brain and testis. Weakly expressed in lung. Not detected in heart, liver, kidney and muscle (at protein level).

The protein resides in the cytoplasm. The protein localises to the P-body. Its subcellular location is the nucleus. The catalysed reaction is a 5'-end (N(7)-methyl 5'-triphosphoguanosine)-ribonucleoside in mRNA + H2O = N(7)-methyl-GDP + a 5'-end phospho-ribonucleoside in mRNA + 2 H(+). Functionally, decapping metalloenzyme that catalyzes the cleavage of the cap structure on mRNAs. Removes the 7-methyl guanine cap structure from mRNA molecules, yielding a 5'-phosphorylated mRNA fragment and 7m-GDP. Necessary for the degradation of mRNAs, both in normal mRNA turnover and in nonsense-mediated mRNA decay. Plays a role in replication-dependent histone mRNA degradation. Has higher activity towards mRNAs that lack a poly(A) tail. Has no activity towards a cap structure lacking an RNA moiety. The presence of a N(6)-methyladenosine methylation at the second transcribed position of mRNAs (N(6),2'-O-dimethyladenosine cap; m6A(m)) provides resistance to DCP2-mediated decapping. Blocks autophagy in nutrient-rich conditions by repressing the expression of ATG-related genes through degradation of their transcripts. This chain is m7GpppN-mRNA hydrolase (Dcp2), found in Mus musculus (Mouse).